Consider the following 254-residue polypeptide: MASRAFAAVFAAVALVVCSSVLPRALASDPSQLQDFCVADKLSAVFVNGFVCKNPKQVTANDFFLPKALGVPGNTVNAQGSAVTPVTVNELPGLNTLGISFARIDFAPNGQNPPHTHPRATEILTVLQGTLLVGFVTSNQPGGGNLQFTKLLGPGDVFVFPQGLIHFQLNNGAVPAVAIAALSSQNPGVITIANAVFGSTPPILDDVLAKAFMIDKDQVDWIQAKFAAPPAASGGGGGFIGGGGGGGFPGGGAP.

The first 27 residues, 1–27 (MASRAFAAVFAAVALVVCSSVLPRALA), serve as a signal peptide directing secretion. C37 and C52 are joined by a disulfide. The region spanning 67-220 (KALGVPGNTV…AFMIDKDQVD (154 aa)) is the Cupin type-1 domain. H115, H117, E122, and H166 together coordinate Mn(2+).

The protein belongs to the germin family. Oligomer (believed to be a pentamer but probably hexamer).

The protein localises to the secreted. It is found in the extracellular space. It localises to the apoplast. In terms of biological role, may play a role in plant defense. Probably has no oxalate oxidase activity even if the active site is conserved. The sequence is that of Germin-like protein 4-1 from Oryza sativa subsp. japonica (Rice).